The following is a 560-amino-acid chain: DNA ligase B (560 aa).

Lys124 functions as the N6-AMP-lysine intermediate in the catalytic mechanism.

Belongs to the NAD-dependent DNA ligase family. LigB subfamily.

It catalyses the reaction NAD(+) + (deoxyribonucleotide)n-3'-hydroxyl + 5'-phospho-(deoxyribonucleotide)m = (deoxyribonucleotide)n+m + AMP + beta-nicotinamide D-nucleotide.. In terms of biological role, catalyzes the formation of phosphodiester linkages between 5'-phosphoryl and 3'-hydroxyl groups in double-stranded DNA using NAD as a coenzyme and as the energy source for the reaction. This is DNA ligase B from Shigella flexneri serotype 5b (strain 8401).